We begin with the raw amino-acid sequence, 472 residues long: Tryptophanase (472 aa).

Position 270 is an N6-(pyridoxal phosphate)lysine (Lys270).

This sequence belongs to the beta-eliminating lyase family. Homotetramer. Pyridoxal 5'-phosphate is required as a cofactor.

The enzyme catalyses L-tryptophan + H2O = indole + pyruvate + NH4(+). The protein operates within amino-acid degradation; L-tryptophan degradation via pyruvate pathway; indole and pyruvate from L-tryptophan: step 1/1. The chain is Tryptophanase from Haemophilus influenzae (strain 86-028NP).